The sequence spans 358 residues: MNAARMNIKVSTPSRNYFVRIGKGLLQEGGSLARQLKLEKKIALLFDQAVETYATTLIDSLKAHDFEPQALAIPSGEGSKSFKTLETIVTALAEMKLDRKSTIIAVGGGVLGDVAGFAASIFLRGISYVLVPTTLLSMVDSSIGGKTGINLPQGKNLVGSFYQPLEVWIDPEVLATLSPRLISAGMAEIIKYGMISDQKLLDEIEKKEQSDLLYLIKRSVEIKAEVVGEDEREQTGRRAILNFGHTLGHALEAANGYKDLLHGEAVAIGMHASCLLSNRLLSFPDESTQRLKKILQLYSLPLKARGLSKKDVLEALQLDKKRERGTISWILLQKIGLPITSKDITKEDIDWILKEVLA.

Residues 75 to 80, 109 to 113, 133 to 134, K146, and K155 contribute to the NAD(+) site; these read SGEGSK, GVLGD, and TT. Residues E188, H245, and H262 each coordinate Zn(2+).

This sequence belongs to the sugar phosphate cyclases superfamily. Dehydroquinate synthase family. The cofactor is Co(2+). It depends on Zn(2+) as a cofactor. NAD(+) is required as a cofactor.

Its subcellular location is the cytoplasm. It catalyses the reaction 7-phospho-2-dehydro-3-deoxy-D-arabino-heptonate = 3-dehydroquinate + phosphate. Its pathway is metabolic intermediate biosynthesis; chorismate biosynthesis; chorismate from D-erythrose 4-phosphate and phosphoenolpyruvate: step 2/7. Functionally, catalyzes the conversion of 3-deoxy-D-arabino-heptulosonate 7-phosphate (DAHP) to dehydroquinate (DHQ). This Methylacidiphilum infernorum (isolate V4) (Methylokorus infernorum (strain V4)) protein is 3-dehydroquinate synthase.